A 470-amino-acid chain; its full sequence is Aminoacyl transferase sphA (470 aa).

Residues S212, H244, and T272 each contribute to the pyridoxal 5'-phosphate site. Residue K275 is modified to N6-(pyridoxal phosphate)lysine.

The protein belongs to the class-II pyridoxal-phosphate-dependent aminotransferase family. BioF subfamily. As to quaternary structure, homodimer. Requires pyridoxal 5'-phosphate as cofactor.

Its pathway is secondary metabolite biosynthesis. Aminoacyl transferase; part of the gene cluster that mediates the biosynthesis of sphingofungins, bioactive molecules acting as sphingolipid inhibitors via inhibiting serine palmitoyl transferase (SPT). Within the pathway, sphA transfers 2-methyl-aminomalonate and 2-hydroxymethyl-aminomalonate onto the sphB product 3-hydroxyoctadeca-4,10-dienoyl-ACP to produce the precursors of sphingofungins E and F. The substrate specificity of sphA using 2-methyl-aminomalonate and 2-hydroxymethyl-aminomalonate instread of aminomalonate is responsible for the biosynthesis of sphingofungins E and F but not B and C like in Aspergillus fumigatus. The PKS sphB does not contain any putative thioesterase domain for releasing the nascent polyketide chain and it has been suggested that aminoacyl transferases can facilitate the polyketide chain release. The polypeptide is Aminoacyl transferase sphA (Byssochlamys spectabilis (Paecilomyces variotii)).